The chain runs to 62 residues: MSKCYITGKTTLFGNRRSHAMNATKRIWKANLQNVKIVDENGKVQKVKISARALKKLKLQRA.

This sequence belongs to the bacterial ribosomal protein bL28 family.

The polypeptide is Large ribosomal subunit protein bL28 (Onion yellows phytoplasma (strain OY-M)).